A 242-amino-acid polypeptide reads, in one-letter code: Leucyl/phenylalanyl-tRNA--protein transferase (242 aa).

It belongs to the L/F-transferase family.

The protein localises to the cytoplasm. The catalysed reaction is N-terminal L-lysyl-[protein] + L-leucyl-tRNA(Leu) = N-terminal L-leucyl-L-lysyl-[protein] + tRNA(Leu) + H(+). It catalyses the reaction N-terminal L-arginyl-[protein] + L-leucyl-tRNA(Leu) = N-terminal L-leucyl-L-arginyl-[protein] + tRNA(Leu) + H(+). The enzyme catalyses L-phenylalanyl-tRNA(Phe) + an N-terminal L-alpha-aminoacyl-[protein] = an N-terminal L-phenylalanyl-L-alpha-aminoacyl-[protein] + tRNA(Phe). Functions in the N-end rule pathway of protein degradation where it conjugates Leu, Phe and, less efficiently, Met from aminoacyl-tRNAs to the N-termini of proteins containing an N-terminal arginine or lysine. The sequence is that of Leucyl/phenylalanyl-tRNA--protein transferase from Edwardsiella ictaluri (strain 93-146).